We begin with the raw amino-acid sequence, 276 residues long: MRKWMIVAAVAAVFGLSACNNGDSEVIVKTKDGNITKEEFYNEMKARVGKEVIRDLVHEKVLSKKYKVTDKEIDKEIENLKEMYGTQYDLVVQQNGEKAIRDMVKLDLLRQKAAMEDIKVTDKELKDYYKNYKPKIRASHILVKDEKTAEEIKTKLDKGEDFAKLAKQYSQDPGSAPNGGDLGWFGPGKMVKEFEDAAYKLKVGQVSDPVKTDYGYHIIKVTDKEEKKPFNEMKEEIEFEVKQSKLDPAKVQSKVEKLIKDAKVEIEDKDLQDVLK.

The signal sequence occupies residues 1–18 (MRKWMIVAAVAAVFGLSA). Cys19 carries the N-palmitoyl cysteine lipid modification. Cys19 carries the S-diacylglycerol cysteine lipid modification. The PpiC domain occupies 133 to 223 (KPKIRASHIL…YGYHIIKVTD (91 aa)).

The protein belongs to the PrsA family.

Its subcellular location is the cell membrane. It carries out the reaction [protein]-peptidylproline (omega=180) = [protein]-peptidylproline (omega=0). Plays a major role in protein secretion by helping the post-translocational extracellular folding of several secreted proteins. The protein is Foldase protein PrsA of Geobacillus sp. (strain WCH70).